The primary structure comprises 254 residues: Alcohol dehydrogenase (254 aa).

10–33 (FVAGLGGIGLDTSREIVKSGPKNL) lines the NAD(+) pocket. Position 138 (Ser-138) interacts with substrate. The active-site Proton acceptor is Tyr-151.

Belongs to the short-chain dehydrogenases/reductases (SDR) family. As to quaternary structure, homodimer.

The enzyme catalyses a primary alcohol + NAD(+) = an aldehyde + NADH + H(+). The catalysed reaction is a secondary alcohol + NAD(+) = a ketone + NADH + H(+). In Drosophila adiastola (Fruit fly), this protein is Alcohol dehydrogenase (Adh).